The sequence spans 458 residues: Elongation factor 1-alpha (458 aa).

Glycine 2 carries the post-translational modification N,N,N-trimethylglycine. Lysine 3 carries the post-translational modification N6,N6-dimethyllysine; alternate. An N6-methyllysine; alternate modification is found at lysine 3. The tr-type G domain maps to 5–240 (KTHVNVVVIG…DAIEPPVRPT (236 aa)). The interval 14–21 (GHVDSGKS) is G1. 14–21 (GHVDSGKS) contributes to the GTP binding site. Position 30 is an N6-methyllysine (lysine 30). Positions 70–74 (GITID) are G2. Lysine 79 is modified (N6,N6,N6-trimethyllysine). The segment at 91 to 94 (DAPG) is G3. Residues 91-95 (DAPGH) and 153-156 (NKMD) each bind GTP. Positions 153-156 (NKMD) are G4. A G5 region spans residues 192 to 194 (SGW). Lysine 316 is modified (N6,N6-dimethyllysine; alternate). The residue at position 316 (lysine 316) is an N6-methyllysine; alternate. N6-methyllysine is present on lysine 390.

The protein belongs to the TRAFAC class translation factor GTPase superfamily. Classic translation factor GTPase family. EF-Tu/EF-1A subfamily.

It is found in the cytoplasm. Functionally, this protein promotes the GTP-dependent binding of aminoacyl-tRNA to the A-site of ribosomes during protein biosynthesis. This chain is Elongation factor 1-alpha (TEF), found in Eremothecium gossypii (strain ATCC 10895 / CBS 109.51 / FGSC 9923 / NRRL Y-1056) (Yeast).